The primary structure comprises 355 residues: Proto-oncogene Wnt-3 (355 aa).

An N-terminal signal peptide occupies residues M1 to A21. Cystine bridges form between C80/C91, C131/C139, C141/C158, C206/C220, C208/C215, C284/C315, C300/C310, C314/C354, C330/C345, C332/C342, and C337/C338. The N-linked (GlcNAc...) asparagine glycan is linked to N90. S212 carries the O-palmitoleoyl serine; by PORCN lipid modification. N-linked (GlcNAc...) asparagine glycosylation occurs at N301.

The protein belongs to the Wnt family. In terms of assembly, forms a soluble 1:1 complex with AFM; this prevents oligomerization and is required for prolonged biological activity. The complex with AFM may represent the physiological form in body fluids. Interacts with PORCN. Interacts with WLS. Palmitoleoylation is required for efficient binding to frizzled receptors. Depalmitoleoylation leads to Wnt signaling pathway inhibition.

It is found in the secreted. The protein localises to the extracellular space. Its subcellular location is the extracellular matrix. Functionally, ligand for members of the frizzled family of seven transmembrane receptors. Functions in the canonical Wnt signaling pathway that results in activation of transcription factors of the TCF/LEF family. Required for normal gastrulation, formation of the primitive streak, and for the formation of the mesoderm during early embryogenesis. Required for normal formation of the apical ectodermal ridge. Required for normal embryonic development, and especially for limb development. The sequence is that of Proto-oncogene Wnt-3 (WNT3) from Homo sapiens (Human).